The primary structure comprises 403 residues: Rhomboid-like protein 15 (403 aa).

5 helical membrane-spanning segments follow: residues isoleucine 22–leucine 42, alanine 70–methionine 90, leucine 103–serine 123, alanine 141–valine 161, and leucine 176–glycine 196. Serine 145 acts as the Nucleophile in catalysis. The active-site Charge relay system is histidine 197. A helical membrane pass occupies residues leucine 198–glycine 218. Residues glutamate 282–asparagine 316 form a disordered region. Positions alanine 361–glutamine 401 constitute a UBA domain.

The protein belongs to the peptidase S54 family.

The protein resides in the membrane. Its function is as follows. Probable rhomboid-type serine protease that catalyzes intramembrane proteolysis. May function in senescence. This is Rhomboid-like protein 15 from Arabidopsis thaliana (Mouse-ear cress).